Consider the following 147-residue polypeptide: MVNWTKTEKATITDIFSHLDYDDIGPKALSRCLIVYPWTQRYFSGFGNLYNAAAIIGNAKVAEHGIKVLHGLDLGLKKMDNIEAAYADLSSLHSEKLHVDPDNFKLLSDCITIVLAAKLGSAFTAETQATFQKFLGAVMSALGKQYH.

In terms of domain architecture, Globin spans 3-147; it reads NWTKTEKATI…VMSALGKQYH (145 aa). Heme b-binding residues include H64 and H93.

The protein belongs to the globin family. As to quaternary structure, heterotetramer of two alpha chains and two beta chains. As to expression, red blood cells.

Its function is as follows. Involved in oxygen transport from gills to the various peripheral tissues. The polypeptide is Hemoglobin subunit beta (hbb) (Gymnodraco acuticeps (Antarctic dragonfish)).